Here is a 602-residue protein sequence, read N- to C-terminus: Sensor histidine kinase AtsR (602 aa).

2 helical membrane-spanning segments follow: residues 11-31 and 182-202; these read IIVA…FLLF and AIVM…LLLF. The region spanning 242–461 is the Histidine kinase domain; it reads MVSHELRTPL…EFVVTLPVEL (220 aa). Histidine 245 is subject to Phosphohistidine; by autocatalysis. Residues 484–601 form the Response regulatory domain; the sequence is HALVVDDNEN…TLNGIVSRLR (118 aa). At aspartate 533 the chain carries 4-aspartylphosphate.

Its subcellular location is the cell inner membrane. It catalyses the reaction ATP + protein L-histidine = ADP + protein N-phospho-L-histidine.. Its function is as follows. Member of a two-component regulatory system involved in control of gene expression; inhibits synthesis of (at least) the polyketide antibiotic thailandamide. Its two-component partner may be BTH_I0635. The polypeptide is Sensor histidine kinase AtsR (Burkholderia thailandensis (strain ATCC 700388 / DSM 13276 / CCUG 48851 / CIP 106301 / E264)).